A 191-amino-acid polypeptide reads, in one-letter code: Protein GrpE (191 aa).

It belongs to the GrpE family. As to quaternary structure, homodimer.

It localises to the cytoplasm. Functionally, participates actively in the response to hyperosmotic and heat shock by preventing the aggregation of stress-denatured proteins, in association with DnaK and GrpE. It is the nucleotide exchange factor for DnaK and may function as a thermosensor. Unfolded proteins bind initially to DnaJ; upon interaction with the DnaJ-bound protein, DnaK hydrolyzes its bound ATP, resulting in the formation of a stable complex. GrpE releases ADP from DnaK; ATP binding to DnaK triggers the release of the substrate protein, thus completing the reaction cycle. Several rounds of ATP-dependent interactions between DnaJ, DnaK and GrpE are required for fully efficient folding. This is Protein GrpE from Nitratidesulfovibrio vulgaris (strain ATCC 29579 / DSM 644 / CCUG 34227 / NCIMB 8303 / VKM B-1760 / Hildenborough) (Desulfovibrio vulgaris).